We begin with the raw amino-acid sequence, 508 residues long: ATP synthase subunit alpha (508 aa).

169–176 (GDRQTGKT) is a binding site for ATP.

This sequence belongs to the ATPase alpha/beta chains family. F-type ATPases have 2 components, CF(1) - the catalytic core - and CF(0) - the membrane proton channel. CF(1) has five subunits: alpha(3), beta(3), gamma(1), delta(1), epsilon(1). CF(0) has three main subunits: a(1), b(2) and c(9-12). The alpha and beta chains form an alternating ring which encloses part of the gamma chain. CF(1) is attached to CF(0) by a central stalk formed by the gamma and epsilon chains, while a peripheral stalk is formed by the delta and b chains.

The protein resides in the cell inner membrane. It carries out the reaction ATP + H2O + 4 H(+)(in) = ADP + phosphate + 5 H(+)(out). Functionally, produces ATP from ADP in the presence of a proton gradient across the membrane. The alpha chain is a regulatory subunit. This chain is ATP synthase subunit alpha, found in Allorhizobium ampelinum (strain ATCC BAA-846 / DSM 112012 / S4) (Agrobacterium vitis (strain S4)).